The following is a 415-amino-acid chain: Calcium/calmodulin-dependent serine/threonine-protein kinase (415 aa).

In terms of domain architecture, Protein kinase spans 12 to 308; sequence YEISEILGRG…AQELLDHPWV (297 aa). Residues 18–26 and lysine 46 each bind ATP; that span reads LGRGGFSVV. The active-site Proton acceptor is aspartate 173. The segment at 318–328 is calmodulin-binding; it reads MDAEIVSRLQS.

It belongs to the protein kinase superfamily. CAMK Ser/Thr protein kinase family. CaMK subfamily.

The catalysed reaction is L-seryl-[protein] + ATP = O-phospho-L-seryl-[protein] + ADP + H(+). The enzyme catalyses L-threonyl-[protein] + ATP = O-phospho-L-threonyl-[protein] + ADP + H(+). May be involved in signal transduction processes. The protein is Calcium/calmodulin-dependent serine/threonine-protein kinase of Malus domestica (Apple).